Here is a 254-residue protein sequence, read N- to C-terminus: 5'-nucleotidase SurE (254 aa).

A divalent metal cation is bound by residues Asp-8, Asp-9, Ser-40, and Asn-93.

This sequence belongs to the SurE nucleotidase family. It depends on a divalent metal cation as a cofactor.

It is found in the cytoplasm. It carries out the reaction a ribonucleoside 5'-phosphate + H2O = a ribonucleoside + phosphate. Nucleotidase that shows phosphatase activity on nucleoside 5'-monophosphates. This Methylorubrum populi (strain ATCC BAA-705 / NCIMB 13946 / BJ001) (Methylobacterium populi) protein is 5'-nucleotidase SurE.